A 646-amino-acid polypeptide reads, in one-letter code: Exoribonuclease 2 (646 aa).

The 328-residue stretch at 191–518 (RIDLTALDFV…NHRLLKAIIQ (328 aa)) folds into the RNB domain. Positions 563-645 (DKTFSAEIVD…ETRNIVARPV (83 aa)) constitute an S1 motif domain.

It belongs to the RNR ribonuclease family. RNase II subfamily.

Its subcellular location is the cytoplasm. The enzyme catalyses Exonucleolytic cleavage in the 3'- to 5'-direction to yield nucleoside 5'-phosphates.. Functionally, involved in mRNA degradation. Hydrolyzes single-stranded polyribonucleotides processively in the 3' to 5' direction. The polypeptide is Exoribonuclease 2 (Xenorhabdus bovienii (strain SS-2004) (Xenorhabdus nematophila subsp. bovienii)).